The following is a 106-amino-acid chain: MNDSEFHQLADELMLQLEETLDQFEGDADIDSEINGGVMTLSFENGSKIVINRQEPLHQIWLATKTGGYHFTLREERWVCDRSGEDFIALLSSACSAQAGETVHFE.

Belongs to the frataxin family.

Functionally, involved in iron-sulfur (Fe-S) cluster assembly. May act as a regulator of Fe-S biogenesis. This Pectobacterium atrosepticum (strain SCRI 1043 / ATCC BAA-672) (Erwinia carotovora subsp. atroseptica) protein is Iron-sulfur cluster assembly protein CyaY.